The following is a 479-amino-acid chain: Ribosomal RNA small subunit methyltransferase F (479 aa).

S-adenosyl-L-methionine contacts are provided by residues alanine 125–lysine 131, glutamate 149, aspartate 176, and aspartate 194. Residue cysteine 247 is the Nucleophile of the active site.

Belongs to the class I-like SAM-binding methyltransferase superfamily. RsmB/NOP family.

The protein resides in the cytoplasm. It catalyses the reaction cytidine(1407) in 16S rRNA + S-adenosyl-L-methionine = 5-methylcytidine(1407) in 16S rRNA + S-adenosyl-L-homocysteine + H(+). Its function is as follows. Specifically methylates the cytosine at position 1407 (m5C1407) of 16S rRNA. This is Ribosomal RNA small subunit methyltransferase F from Salmonella agona (strain SL483).